Here is a 1329-residue protein sequence, read N- to C-terminus: BRCT domain-containing protein At4g02110 (1329 aa).

BRCT domains lie at 7 to 97 (LPPK…SILY) and 104 to 194 (NGIP…DYEI). 5 disordered regions span residues 295 to 378 (ANKT…SMER), 393 to 470 (GEEF…TSEL), 576 to 645 (EVPE…SPTD), 745 to 827 (NDVP…ADGK), and 952 to 1077 (AKKE…KESK). 2 stretches are compositionally biased toward polar residues: residues 323-335 (SLAT…LQRS) and 363-378 (SAFN…SMER). Basic and acidic residues-rich tracts occupy residues 410–422 (VSRK…HHNS) and 600–611 (RMKDKQETELTT). Residues 793-802 (GKSRVKKTKI) are compositionally biased toward basic residues. 2 stretches are compositionally biased toward basic and acidic residues: residues 818 to 827 (DGGDNSADGK) and 971 to 983 (DDNK…EGIV). Residues 986–1004 (SSLQSGKKGSSSRVEVGKS) are compositionally biased toward low complexity. Residues 1024–1047 (VMKDVGDNSAKEKENIAVDNESRK) show a composition bias toward basic and acidic residues. Residues 1090–1181 (FQDQEHEPKF…KLLQEEPYEW (92 aa)) form the BRCT 3 domain.

This is BRCT domain-containing protein At4g02110 from Arabidopsis thaliana (Mouse-ear cress).